Here is a 233-residue protein sequence, read N- to C-terminus: DNA-directed RNA polymerase I subunit RPA34 (233 aa).

Phosphoserine is present on residues Ser-10, Ser-12, Ser-14, and Ser-60. Residues 179-191 are compositionally biased toward basic and acidic residues; that stretch reads DFHVAEEVKENKK. The interval 179–233 is disordered; sequence DFHVAEEVKENKKEPKKRSHHDDEEESSEKKKKKKEKREKREKKDKKDKKKKHRD. The segment covering 208 to 233 has biased composition (basic residues); that stretch reads KKKKKKEKREKREKKDKKDKKKKHRD.

This sequence belongs to the eukaryotic RPA34 RNA polymerase subunit family. In terms of assembly, component of the RNA polymerase I (Pol I) complex consisting of 14 subunits: RPA135, RPA190, RPC40, RPA14, RPB5, RPO26, RPA43, RPB8, RPA12, RPB10, RPC19, RPC10, RPA49 and RPA34. The complex is composed of a horseshoe-shaped core containing ten subunits (RPA135, RPA190, RPB5, RPO26, RPB8, RPB10, RPC10, RPA12, RPC19 and RPC40) where RPA135 and RPA190 form the DNA-binding cleft. Outside of the core, RPA14 and RPA43 form the stalk that mediates interactions with transcription initiation factors and newly synthesized RNA. Forms a TFIIF-like heterodimer with RPA49; the heterodimer formed by RPA34 and RPA49 can be dissociated from the Pol I core giving rise to a 12 subunit form A* of Pol I (formerly called pol A) that shows impaired transcript elongation activity and increased sensitivity to alpha-amanitin. The heterodimer formed by RPA34 and RPA49 stabilizes subunit RPA12 and stimulates RPA12-dependent RNA cleavage.

Its subcellular location is the nucleus. It is found in the nucleolus. Functionally, DNA-dependent RNA polymerases catalyze the transcription of DNA into RNA using the four ribonucleoside triphosphates as substrates. Component of RNA polymerase I (Pol I) which synthesizes ribosomal RNA precursors. Besides, RNA polymerase I has intrinsic RNA cleavage activity. The heterodimer formed by RPA34 and RPA49 stimulates transcript elongation by Pol I. In Saccharomyces cerevisiae (strain ATCC 204508 / S288c) (Baker's yeast), this protein is DNA-directed RNA polymerase I subunit RPA34 (RPA34).